Reading from the N-terminus, the 199-residue chain is Guanylate kinase (199 aa).

In terms of domain architecture, Guanylate kinase-like spans 19 to 198 (VTVAVVSGPT…AVAHLVELLS (180 aa)). 26 to 33 (GPTAVGKG) lines the ATP pocket.

Belongs to the guanylate kinase family.

Its subcellular location is the cytoplasm. It catalyses the reaction GMP + ATP = GDP + ADP. Functionally, essential for recycling GMP and indirectly, cGMP. This chain is Guanylate kinase, found in Cutibacterium acnes (strain DSM 16379 / KPA171202) (Propionibacterium acnes).